The sequence spans 360 residues: Photosystem II protein D1 (360 aa).

The next 3 membrane-spanning stretches (helical) occupy residues Y29 to T46, H118 to F133, and W142 to A156. A chlorophyll a-binding site is contributed by H118. W126 is a pheophytin a binding site. [CaMn4O5] cluster-binding residues include D170 and E189. The helical transmembrane segment at F197–L218 threads the bilayer. H198 serves as a coordination point for chlorophyll a. A quinone is bound by residues H215 and S264–F265. H215 contacts Fe cation. H272 is a Fe cation binding site. Residues F274–L288 form a helical membrane-spanning segment. [CaMn4O5] cluster is bound by residues H332, E333, D342, and A344. Residues S345–G360 constitute a propeptide that is removed on maturation.

This sequence belongs to the reaction center PufL/M/PsbA/D family. As to quaternary structure, PSII is composed of 1 copy each of membrane proteins PsbA, PsbB, PsbC, PsbD, PsbE, PsbF, PsbH, PsbI, PsbJ, PsbK, PsbL, PsbM, PsbT, PsbX, PsbY, PsbZ, Psb30/Ycf12, at least 3 peripheral proteins of the oxygen-evolving complex and a large number of cofactors. It forms dimeric complexes. The D1/D2 heterodimer binds P680, chlorophylls that are the primary electron donor of PSII, and subsequent electron acceptors. It shares a non-heme iron and each subunit binds pheophytin, quinone, additional chlorophylls, carotenoids and lipids. D1 provides most of the ligands for the Mn4-Ca-O5 cluster of the oxygen-evolving complex (OEC). There is also a Cl(-1) ion associated with D1 and D2, which is required for oxygen evolution. The PSII complex binds additional chlorophylls, carotenoids and specific lipids. serves as cofactor. Post-translationally, tyr-161 forms a radical intermediate that is referred to as redox-active TyrZ, YZ or Y-Z. In terms of processing, C-terminally processed by CTPA; processing is essential to allow assembly of the oxygen-evolving complex and thus photosynthetic growth.

The protein resides in the plastid. The protein localises to the chloroplast thylakoid membrane. The enzyme catalyses 2 a plastoquinone + 4 hnu + 2 H2O = 2 a plastoquinol + O2. Functionally, photosystem II (PSII) is a light-driven water:plastoquinone oxidoreductase that uses light energy to abstract electrons from H(2)O, generating O(2) and a proton gradient subsequently used for ATP formation. It consists of a core antenna complex that captures photons, and an electron transfer chain that converts photonic excitation into a charge separation. The D1/D2 (PsbA/PsbD) reaction center heterodimer binds P680, the primary electron donor of PSII as well as several subsequent electron acceptors. The protein is Photosystem II protein D1 of Guillardia theta (Cryptophyte).